Reading from the N-terminus, the 312-residue chain is ECF RNA polymerase sigma factor SigJ (312 aa).

The segment at Phe-6–Arg-65 is sigma-70 factor domain-2. The short motif at Asp-29–Gln-32 is the Polymerase core binding element. A sigma-70 factor domain-4 region spans residues Met-107–Ala-155. Residues Phe-131–Ser-150 constitute a DNA-binding region (H-T-H motif). Residues Gly-293–Asn-312 form a disordered region.

Belongs to the sigma-70 factor family. ECF subfamily. Interacts transiently with the RNA polymerase catalytic core formed by RpoA, RpoB, RpoC and RpoZ (2 alpha, 1 beta, 1 beta' and 1 omega subunit) to form the RNA polymerase holoenzyme that can initiate transcription.

In terms of biological role, sigma factors are initiation factors that promote the attachment of RNA polymerase to specific initiation sites and are then released. Extracytoplasmic function (ECF) sigma factors are held in an inactive form by an anti-sigma factor until released, although no anti-sigma factor is known for this protein. Regulates the promoter of SigI, may not be autoregulated. This is ECF RNA polymerase sigma factor SigJ (sigJ) from Mycobacterium tuberculosis (strain ATCC 25618 / H37Rv).